The primary structure comprises 818 residues: Glycerol-3-phosphate acyltransferase (818 aa).

The short motif at 308-313 (CHRSHM) is the HXXXXD motif element.

The protein belongs to the GPAT/DAPAT family.

The protein localises to the cell inner membrane. It carries out the reaction sn-glycerol 3-phosphate + an acyl-CoA = a 1-acyl-sn-glycero-3-phosphate + CoA. Its pathway is phospholipid metabolism; CDP-diacylglycerol biosynthesis; CDP-diacylglycerol from sn-glycerol 3-phosphate: step 1/3. The protein is Glycerol-3-phosphate acyltransferase of Alteromonas mediterranea (strain DSM 17117 / CIP 110805 / LMG 28347 / Deep ecotype).